The sequence spans 1372 residues: DNA-directed RNA polymerase subunit beta (1372 aa).

The protein belongs to the RNA polymerase beta chain family. As to quaternary structure, the RNAP catalytic core consists of 2 alpha, 1 beta, 1 beta' and 1 omega subunit. When a sigma factor is associated with the core the holoenzyme is formed, which can initiate transcription.

It carries out the reaction RNA(n) + a ribonucleoside 5'-triphosphate = RNA(n+1) + diphosphate. Its function is as follows. DNA-dependent RNA polymerase catalyzes the transcription of DNA into RNA using the four ribonucleoside triphosphates as substrates. The chain is DNA-directed RNA polymerase subunit beta from Psychrobacter arcticus (strain DSM 17307 / VKM B-2377 / 273-4).